Consider the following 152-residue polypeptide: Ribosome maturation factor RimP (152 aa).

The protein belongs to the RimP family.

Its subcellular location is the cytoplasm. Required for maturation of 30S ribosomal subunits. This is Ribosome maturation factor RimP from Sodalis glossinidius (strain morsitans).